We begin with the raw amino-acid sequence, 267 residues long: Phosphonoacetaldehyde hydrolase (267 aa).

D10 serves as the catalytic Nucleophile. 2 residues coordinate Mg(2+): D10 and A12. Catalysis depends on K51, which acts as the Schiff-base intermediate with substrate. Mg(2+) is bound at residue D184.

The protein belongs to the HAD-like hydrolase superfamily. PhnX family. Homodimer. Requires Mg(2+) as cofactor.

It catalyses the reaction phosphonoacetaldehyde + H2O = acetaldehyde + phosphate + H(+). Functionally, involved in phosphonate degradation. The protein is Phosphonoacetaldehyde hydrolase of Paraburkholderia xenovorans (strain LB400).